We begin with the raw amino-acid sequence, 96 residues long: Aspartyl/glutamyl-tRNA(Asn/Gln) amidotransferase subunit C (96 aa).

This sequence belongs to the GatC family. In terms of assembly, heterotrimer of A, B and C subunits.

The enzyme catalyses L-glutamyl-tRNA(Gln) + L-glutamine + ATP + H2O = L-glutaminyl-tRNA(Gln) + L-glutamate + ADP + phosphate + H(+). It carries out the reaction L-aspartyl-tRNA(Asn) + L-glutamine + ATP + H2O = L-asparaginyl-tRNA(Asn) + L-glutamate + ADP + phosphate + 2 H(+). Its function is as follows. Allows the formation of correctly charged Asn-tRNA(Asn) or Gln-tRNA(Gln) through the transamidation of misacylated Asp-tRNA(Asn) or Glu-tRNA(Gln) in organisms which lack either or both of asparaginyl-tRNA or glutaminyl-tRNA synthetases. The reaction takes place in the presence of glutamine and ATP through an activated phospho-Asp-tRNA(Asn) or phospho-Glu-tRNA(Gln). This is Aspartyl/glutamyl-tRNA(Asn/Gln) amidotransferase subunit C from Bacillus anthracis (strain A0248).